We begin with the raw amino-acid sequence, 392 residues long: 8-amino-7-oxononanoate synthase 1 (392 aa).

109-110 is a binding site for pyridoxal 5'-phosphate; the sequence is GF. Position 134 (His134) interacts with substrate. Pyridoxal 5'-phosphate-binding positions include Ser181, 206–209, and 237–240; these read DDAH and TLSK. The residue at position 240 (Lys240) is an N6-(pyridoxal phosphate)lysine. Residue Thr354 coordinates substrate.

Belongs to the class-II pyridoxal-phosphate-dependent aminotransferase family. BioF subfamily. Homodimer. The cofactor is pyridoxal 5'-phosphate.

The catalysed reaction is 6-carboxyhexanoyl-[ACP] + L-alanine + H(+) = (8S)-8-amino-7-oxononanoate + holo-[ACP] + CO2. It participates in cofactor biosynthesis; biotin biosynthesis. Functionally, catalyzes the decarboxylative condensation of pimeloyl-[acyl-carrier protein] and L-alanine to produce 8-amino-7-oxononanoate (AON), [acyl-carrier protein], and carbon dioxide. The sequence is that of 8-amino-7-oxononanoate synthase 1 (kbl) from Bacillus subtilis (strain 168).